The chain runs to 169 residues: S-ribosylhomocysteine lyase (169 aa).

Fe cation-binding residues include His-54, His-58, and Cys-128.

It belongs to the LuxS family. As to quaternary structure, homodimer. It depends on Fe cation as a cofactor.

It carries out the reaction S-(5-deoxy-D-ribos-5-yl)-L-homocysteine = (S)-4,5-dihydroxypentane-2,3-dione + L-homocysteine. In terms of biological role, involved in the synthesis of autoinducer 2 (AI-2) which is secreted by bacteria and is used to communicate both the cell density and the metabolic potential of the environment. The regulation of gene expression in response to changes in cell density is called quorum sensing. Catalyzes the transformation of S-ribosylhomocysteine (RHC) to homocysteine (HC) and 4,5-dihydroxy-2,3-pentadione (DPD). The polypeptide is S-ribosylhomocysteine lyase (Shewanella oneidensis (strain ATCC 700550 / JCM 31522 / CIP 106686 / LMG 19005 / NCIMB 14063 / MR-1)).